A 711-amino-acid polypeptide reads, in one-letter code: RB-associated KRAB zinc finger protein (711 aa).

The KRAB domain occupies 8–79; it reads LSFKDVAVAF…EGDRHAQRHL (72 aa). Residues K97 and K256 each participate in a glycyl lysine isopeptide (Lys-Gly) (interchain with G-Cter in SUMO2) cross-link. The segment at 170 to 257 is required for interaction with RB1; that stretch reads AYGESLEDFN…YPRSQMELKP (88 aa). 2 C2H2-type zinc fingers span residues 258–280 and 286–308; these read FECTQCGKSFCKKSKFIIHQRAH and YACSVCGKSFSQKGTLTVHRRSH. A Glycyl lysine isopeptide (Lys-Gly) (interchain with G-Cter in SUMO2) cross-link involves residue K312. 6 consecutive C2H2-type zinc fingers follow at residues 314 to 336, 342 to 364, 370 to 392, 398 to 420, 426 to 448, and 454 to 476; these read YKCNECGKTFCQKLHLTQHQRTH, YECSECGKSFCQKTHLTLHQRNH, YPCNECGKSFSRKSALNDHQRTH, YKCNECGKSYYRKSTLITHQRTH, YQCSECGKFFSRVSYLTIHYRSH, and YECTECGKTFNLNSAFIRHWKVH. A Glycyl lysine isopeptide (Lys-Gly) (interchain with G-Cter in SUMO2) cross-link involves residue K354. Residues 414-711 are interaction with AR; the sequence is ITHQRTHTGE…TVNVLTVEKL (298 aa). The C2H2-type 9; degenerate zinc finger occupies 508–530; that stretch reads YECNECGKTFLDSSAFHRHQSVP. Residue K534 forms a Glycyl lysine isopeptide (Lys-Gly) (interchain with G-Cter in SUMO2) linkage. 6 consecutive C2H2-type zinc fingers follow at residues 536–558, 564–586, 592–614, 620–642, 648–670, and 676–698; these read YECNICGKSFSDSSCYTVHYRGH, FGCSECGKTFSHNSSLFRHQRVH, YECYECGKFFSQKSYLTIHHRIH, YECSKCGKVFSRMSNLTVHYRSH, YECNECGKVFSQKSYLTVHYRTH, and YECNECGKKFHHRSAFNSHQRIH.

This sequence belongs to the krueppel C2H2-type zinc-finger protein family. As to quaternary structure, interacts with AR. May also interact with other nuclear hormone receptors such as NR3C1/GR. Interacts with RB1.

The protein localises to the nucleus. May repress E2F-dependent transcription. May promote AR-dependent transcription. The polypeptide is RB-associated KRAB zinc finger protein (Rbak) (Mus musculus (Mouse)).